The chain runs to 704 residues: Lebercilin (704 aa).

Residues 1 to 14 show a composition bias toward basic and acidic residues; sequence MGERARSPDIEQGK. Residues 1–80 are disordered; it reads MGERARSPDI…VSPKAVPSKK (80 aa). Serine 7 is modified (phosphoserine). Residues 25–40 show a composition bias toward low complexity; the sequence is SSDLGSSPQSSGPSSP. Serine 48 is subject to Phosphoserine. The segment covering 49–63 has biased composition (basic and acidic residues); the sequence is TREKNPKRHLSDNQV. The stretch at 105 to 300 forms a coiled coil; that stretch reads KRVLSARLLK…KEKELDIKNI (196 aa). Disordered regions lie at residues 389–417 and 476–661; these read QEGK…AREE and ELQD…GDEE. Over residues 404–417 the composition is skewed to basic and acidic residues; the sequence is QEARKPESEWAREE. Residues 448-479 are a coiled coil; it reads AQSVDKFEDEAERLKTEMLLAKLNEINKELQD. The segment covering 496–505 has biased composition (basic and acidic residues); sequence SKLHSPDRST. The span at 570–591 shows a compositional bias: polar residues; that stretch reads GKSNPPSQKSSLLDFQSNSSES. Residues 592–608 show a composition bias toward basic and acidic residues; sequence PSKDSLDLMSRKEKKAT. Residues 617-627 are compositionally biased toward low complexity; it reads SASNTSVSSKS.

Belongs to the LCA5 family. As to quaternary structure, interacts with NINL. Interacts with OFD1. Interacts with FAM161A. Interacts with components of the IFT complex B. As to expression, detected in several tissues.

It is found in the cytoplasm. The protein resides in the cytoskeleton. Its subcellular location is the cilium axoneme. It localises to the cilium basal body. The protein localises to the cell projection. It is found in the cilium. Its function is as follows. Involved in intraflagellar protein (IFT) transport in photoreceptor cilia. This Mus musculus (Mouse) protein is Lebercilin (Lca5).